We begin with the raw amino-acid sequence, 262 residues long: MQQPIVGVGHSMGGCQIATLSVTSRRMFSTMILLDPAIGPLDMGLATLGLGQLTLRRRTQWPTREDAEKALRTSFSTWDPQVLDLLIRHSIHSDKQSIEMEDGPVSLVTGRYQELVNYIKPSFIRSGKVNGQELVHQTGPVDMYHMLGLVTCSALYLCGGESTLSVPRARDLWLSRTAKLSYSKEPGETRKVDERVVPDTGHFLPMEEPKECADIIADWIEKDECIAWNCCLGKRGKTWRELSNASKEMGAEAWMEYLQSKL.

The Peroxisomal targeting signal type 1 motif lies at 260 to 262 (SKL).

It belongs to the AB hydrolase superfamily. AKT2 hydrolase family.

The protein resides in the peroxisome. The protein operates within mycotoxin biosynthesis. In terms of biological role, abhydrolase domain-containing protein; part of the gene clusters that mediate the biosynthesis of the host-selective toxins (HSTs) AF-toxins responsible for Alternaria black spot of strawberry disease by the strawberry pathotype. AF-toxin I and III are valine derivatives of 2,3-dyhydroxy-isovaleric acid and 2-hydroxy-isovaleric acid respectively, while AF II is an isoleucine derivative of 2-hydroxy-valeric acid. These derivatives are bound to a 9,10-epoxy-8-hydroxy-9-methyl-decatrienoic acid (EDA) moiety. On cellular level, AF-toxins affect plasma membrane of susceptible cells and cause a sudden increase in loss of K(+) after a few minutes of toxin treatment. The aldo-keto reductase AFTS1 catalyzes the conversion of 2-keto-isovaleric acid (2-KIV) to 2-hydroxy-isovaleric acid (2-HIV) by reduction of its ketone to an alcohol. The acyl-CoA ligase AFT1, the hydrolase AFT2 and the enoyl-CoA hydratases AFT3 and AFT6, but also the polyketide synthase AFT9, the acyl-CoA dehydrogenase AFT10, the cytochrome P450 monooxygenase AFT11 and the oxidoreductase AFT12 are all involved in the biosynthesis of the AK-, AF- and ACT-toxin common EDA structural moiety. The exact function of each enzyme, and of additional enzymes identified within the AF-toxin clusters have still to be determined. The chain is Abhydrolase domain-containing protein AFT2-1 from Alternaria alternata (Alternaria rot fungus).